The sequence spans 912 residues: Lateral signaling target protein 2 homolog (912 aa).

A compositionally biased stretch (low complexity) spans 323-332; the sequence is NVNTSNNSDN. Disordered regions lie at residues 323–360, 455–610, 664–745, and 769–846; these read NVNT…SSFY, ADSG…ESSQ, NSSP…ASSA, and GGGS…APPR. The segment covering 333 to 355 has biased composition (basic and acidic residues); that stretch reads SDSRVDDSPNDELRHESETRDNR. Polar residues predominate over residues 455 to 468; sequence ADSGLGTANPSVDN. Over residues 486–505 the composition is skewed to acidic residues; the sequence is SSEEGEIDEYDNEEDDEDSD. Basic residues predominate over residues 530–544; sequence YRTHKQQHHHRHRRS. 2 stretches are compositionally biased toward polar residues: residues 545 to 556 and 572 to 590; these read SGSIMSATSSRK and VPSN…DTSP. A compositionally biased stretch (low complexity) spans 591–610; it reads SSGNQSECSSTSSTTGESSQ. The span at 682-699 shows a compositional bias: basic and acidic residues; that stretch reads DKPKEPDPTDLFEFRASE. Composition is skewed to polar residues over residues 705–717, 735–745, 780–801, and 822–834; these read PGQN…QSIY, PGTSPIRASSA, ERSV…ATDS, and SRSS…NGTS. An FYVE-type zinc finger spans residues 850–910; that stretch reads DGDAPRCMAC…VCRDCYVREV (61 aa). 8 residues coordinate Zn(2+): cysteine 856, cysteine 859, cysteine 872, cysteine 875, cysteine 880, cysteine 883, cysteine 902, and cysteine 905.

This sequence belongs to the lst-2 family.

In terms of biological role, negative regulator of epidermal growth factor receptor (EGFR) signaling. The sequence is that of Lateral signaling target protein 2 homolog from Aedes aegypti (Yellowfever mosquito).